The following is a 241-amino-acid chain: Pyridoxine 5'-phosphate synthase (241 aa).

Residue Asn10 participates in 3-amino-2-oxopropyl phosphate binding. Position 12–13 (12–13) interacts with 1-deoxy-D-xylulose 5-phosphate; the sequence is DH. Residue Arg21 participates in 3-amino-2-oxopropyl phosphate binding. Catalysis depends on His48, which acts as the Proton acceptor. Arg50 and His55 together coordinate 1-deoxy-D-xylulose 5-phosphate. The active-site Proton acceptor is the Glu75. Thr105 provides a ligand contact to 1-deoxy-D-xylulose 5-phosphate. The active-site Proton donor is His195. 3-amino-2-oxopropyl phosphate contacts are provided by residues Gly196 and 217 to 218; that span reads GH.

It belongs to the PNP synthase family. As to quaternary structure, homooctamer; tetramer of dimers.

The protein localises to the cytoplasm. It carries out the reaction 3-amino-2-oxopropyl phosphate + 1-deoxy-D-xylulose 5-phosphate = pyridoxine 5'-phosphate + phosphate + 2 H2O + H(+). It participates in cofactor biosynthesis; pyridoxine 5'-phosphate biosynthesis; pyridoxine 5'-phosphate from D-erythrose 4-phosphate: step 5/5. Its function is as follows. Catalyzes the complicated ring closure reaction between the two acyclic compounds 1-deoxy-D-xylulose-5-phosphate (DXP) and 3-amino-2-oxopropyl phosphate (1-amino-acetone-3-phosphate or AAP) to form pyridoxine 5'-phosphate (PNP) and inorganic phosphate. The sequence is that of Pyridoxine 5'-phosphate synthase from Bdellovibrio bacteriovorus (strain ATCC 15356 / DSM 50701 / NCIMB 9529 / HD100).